A 1416-amino-acid chain; its full sequence is Isonitrile lipopeptide synthase (1416 aa).

Positions 188 to 215 (LRETAKVAEALRRQADAVQRELTAEAGQ) form a coiled coil. In terms of domain architecture, Carrier spans 965-1028 (RVWSRHLGRP…NLVCDLGSNP (64 aa)). Position 988 is an O-(pantetheine 4'-phosphoryl)serine (Ser-988).

This sequence belongs to the ATP-dependent AMP-binding enzyme family. It depends on pantetheine 4'-phosphate as a cofactor.

The catalysed reaction is 2 a (3R)-3-isocyanyl-fatty acyl-[ACP] + L-lysine + ATP + 2 NADPH = an isonitrile lipopeptide + 2 holo-[ACP] + AMP + diphosphate + 2 NADP(+). Nonribosomal peptide synthetase (NRPS) involved in the biosynthesis of a unique class of isonitrile lipopeptides (INLPs) that seem to play a role in metal acquisition in M.marinum. Catalyzes the final step in the pathway, i.e. the condensation of a (3R)-3-isocyanyl-fatty acyl-[ACP] to both amino groups of a lysine, producing isonitrile lipopeptides. The chain is Isonitrile lipopeptide synthase from Mycobacterium marinum (strain ATCC BAA-535 / M).